Here is a 339-residue protein sequence, read N- to C-terminus: 4-hydroxy-2-oxovalerate aldolase 3 (339 aa).

Positions 7-259 (IRVTDTSLRD…KTGIDFFAIA (253 aa)) constitute a Pyruvate carboxyltransferase domain. 15-16 (RD) is a substrate binding site. A Mn(2+)-binding site is contributed by Asp-16. The Proton acceptor role is filled by His-19. 2 residues coordinate substrate: Ser-169 and His-198. His-198 and His-200 together coordinate Mn(2+). Tyr-289 is a binding site for substrate.

The protein belongs to the 4-hydroxy-2-oxovalerate aldolase family.

It catalyses the reaction (S)-4-hydroxy-2-oxopentanoate = acetaldehyde + pyruvate. This chain is 4-hydroxy-2-oxovalerate aldolase 3, found in Rhodococcus opacus (strain B4).